Consider the following 507-residue polypeptide: Keratin, type II cuticular Hb5 (507 aa).

The head stretch occupies residues 1 to 123; the sequence is MSCRSYRISP…PNAQCVKYEE (123 aa). The region spanning 123–434 is the IF rod domain; the sequence is EKEQIKCLNS…RLLEGEEQRL (312 aa). A coil 1A region spans residues 124-158; it reads KEQIKCLNSKFAAFIDKVRFLEQQNKLLETKWQFY. A linker 1 region spans residues 159–168; the sequence is QNRKCCESNL. A coil 1B region spans residues 169–269; the sequence is EPLFGGYIEA…YEEEVCVLQA (101 aa). Residue K229 forms a Glycyl lysine isopeptide (Lys-Gly) (interchain with G-Cter in SUMO1) linkage. Residues 270–286 are linker 12; it reads HISDTSVIVKMDNSRDL. The tract at residues 287-430 is coil 2; that stretch reads NMDCVVAEIK…ATYRRLLEGE (144 aa). The segment at 431–507 is tail; sequence EQRLCEGVGS…CGSSRSVRFA (77 aa).

It belongs to the intermediate filament family. In terms of assembly, heterotetramer of two type I and two type II keratins.

The sequence is that of Keratin, type II cuticular Hb5 (Krt85) from Mus musculus (Mouse).